Consider the following 202-residue polypeptide: Superoxide dismutase [Mn] (202 aa).

Mn(2+) is bound at residue H27. Phosphothreonine occurs at positions 34 and 70. H82, D164, and H168 together coordinate Mn(2+).

The protein belongs to the iron/manganese superoxide dismutase family. As to quaternary structure, homodimer; under aerobic conditions. Under anaerobic conditions it is a component of the so-called 'green protein' complex (GPC), which consists of at least two components, SodA and a nucleoside diphosphate kinase (NDK). It depends on Mn(2+) as a cofactor.

It is found in the cytoplasm. The enzyme catalyses 2 superoxide + 2 H(+) = H2O2 + O2. Its function is as follows. Destroys superoxide anion radicals which are normally produced within the cells and which are toxic to biological systems. Active only in homodimeric state. This is Superoxide dismutase [Mn] (sodA) from Virgibacillus halodenitrificans (Bacillus halodenitrificans).